Here is a 301-residue protein sequence, read N- to C-terminus: Envoplakin-like protein (301 aa).

The stretch at 1–88 (MQASADQVER…ERVTQECAEY (88 aa)) forms a coiled coil. Disordered regions lie at residues 18–41 (RLQQ…TGSS) and 118–166 (GLRR…PEPI). Residues 26–41 (SEQSQALQHQQETGSS) show a composition bias toward polar residues. A compositionally biased stretch (basic and acidic residues) spans 136 to 151 (GAQHRAEGDQRPRRAA).

It belongs to the plakin or cytolinker family.

This is Envoplakin-like protein (EVPLL) from Homo sapiens (Human).